We begin with the raw amino-acid sequence, 160 residues long: Phosphoribosyl-ATP pyrophosphatase (160 aa).

Belongs to the PRA-PH family.

It is found in the cytoplasm. The catalysed reaction is 1-(5-phospho-beta-D-ribosyl)-ATP + H2O = 1-(5-phospho-beta-D-ribosyl)-5'-AMP + diphosphate + H(+). Its pathway is amino-acid biosynthesis; L-histidine biosynthesis; L-histidine from 5-phospho-alpha-D-ribose 1-diphosphate: step 2/9. The protein is Phosphoribosyl-ATP pyrophosphatase of Granulibacter bethesdensis (strain ATCC BAA-1260 / CGDNIH1).